A 182-amino-acid polypeptide reads, in one-letter code: NADH-quinone oxidoreductase subunit C 2 (182 aa).

The tract at residues Tyr-153–Arg-182 is disordered.

This sequence belongs to the complex I 30 kDa subunit family. In terms of assembly, NDH-1 is composed of 14 different subunits. Subunits NuoB, C, D, E, F, and G constitute the peripheral sector of the complex.

The protein localises to the cell inner membrane. The enzyme catalyses a quinone + NADH + 5 H(+)(in) = a quinol + NAD(+) + 4 H(+)(out). Its function is as follows. NDH-1 shuttles electrons from NADH, via FMN and iron-sulfur (Fe-S) centers, to quinones in the respiratory chain. The immediate electron acceptor for the enzyme in this species is believed to be ubiquinone. Couples the redox reaction to proton translocation (for every two electrons transferred, four hydrogen ions are translocated across the cytoplasmic membrane), and thus conserves the redox energy in a proton gradient. The polypeptide is NADH-quinone oxidoreductase subunit C 2 (Rhizobium meliloti (strain 1021) (Ensifer meliloti)).